Reading from the N-terminus, the 179-residue chain is Probable mitochondrial import inner membrane translocase subunit Tim17 1 (179 aa).

The next 3 helical transmembrane spans lie at 17–37, 61–81, and 113–133; these read CGGA…IKGF, LVGG…CSLV, and LSSA…GIVV.

This sequence belongs to the Tim17/Tim22/Tim23 family. As to quaternary structure, component of the TIM23 complex at least composed of Tim23, Tim17 (Tim17a1, Tim17a2 or Tim17b1) and a Tim50. The complex interacts with the Tim44 component of the PAM complex.

It is found in the mitochondrion inner membrane. In terms of biological role, essential component of the TIM23 complex, a complex that mediates the translocation of transit peptide-containing proteins across the mitochondrial inner membrane. The chain is Probable mitochondrial import inner membrane translocase subunit Tim17 1 (Tim17b1) from Drosophila melanogaster (Fruit fly).